Reading from the N-terminus, the 202-residue chain is MSAKAATKNATKVAVKAPEATTPVETKKSKKDNVMRGLRIEKLVLNICVGESGDRLVRAAKVLEQLTGQTPVYSKARYTVRSFNIRRNEQIAAHVTVRGEKAAEILEKGLKVREFELRARNFSTQGSFGFGIQEHIDLGIKYDPSIGIYGMDFFVVLSRPGFRVAHKKRAGAKVGFQHKIGKEDAVNWFKTTYDGIVIGGKK.

Positions 1–17 are enriched in low complexity; sequence MSAKAATKNATKVAVKA. The tract at residues 1 to 30 is disordered; it reads MSAKAATKNATKVAVKAPEATTPVETKKSK.

It belongs to the universal ribosomal protein uL5 family. In terms of assembly, component of the large ribosomal subunit.

The protein resides in the nucleus. The protein localises to the cytoplasm. Functionally, component of the ribosome, a large ribonucleoprotein complex responsible for the synthesis of proteins in the cell. The small ribosomal subunit (SSU) binds messenger RNAs (mRNAs) and translates the encoded message by selecting cognate aminoacyl-transfer RNA (tRNA) molecules. The large subunit (LSU) contains the ribosomal catalytic site termed the peptidyl transferase center (PTC), which catalyzes the formation of peptide bonds, thereby polymerizing the amino acids delivered by tRNAs into a polypeptide chain. The nascent polypeptides leave the ribosome through a tunnel in the LSU and interact with protein factors that function in enzymatic processing, targeting, and the membrane insertion of nascent chains at the exit of the ribosomal tunnel. The protein is Large ribosomal subunit protein uL5 (rpl11) of Dictyostelium discoideum (Social amoeba).